The following is a 423-amino-acid chain: uncharacterized protein (423 aa).

This is an uncharacterized protein from Pasteurella multocida (strain Pm70).